Consider the following 239-residue polypeptide: Transcriptional regulatory protein DcuR (239 aa).

The region spanning 3 to 121 is the Response regulatory domain; that stretch reads NVLIIDDDAM…RFEEALTGWR (119 aa). Asp-56 carries the 4-aspartylphosphate modification. Residues 181-200 constitute a DNA-binding region (H-T-H motif); it reads TDELANEVNISRVSCRKYLI.

Phosphorylated and activated by DcuS.

It is found in the cytoplasm. Member of the two-component regulatory system DcuR/DcuS. Involved in the C4-dicarboxylate-stimulated regulation of the genes encoding the anaerobic fumarate respiratory system (frdABCD; nuoAN; dcuB; dcuC; sdhCDAB; etc.). Weakly regulates the aerobic C4-dicarboxylate transporter dctA. The sequence is that of Transcriptional regulatory protein DcuR (dcuR) from Escherichia coli O6:H1 (strain CFT073 / ATCC 700928 / UPEC).